The sequence spans 621 residues: UvrABC system protein C (621 aa).

The GIY-YIG domain maps to 21 to 100; sequence AEPGVYLMRD…IKTYQPPYNV (80 aa). Positions 210-245 constitute a UVR domain; that stretch reads DELIRELKEKMAQAAQQENYEAAARYRDQIRGLEQL.

It belongs to the UvrC family. As to quaternary structure, interacts with UvrB in an incision complex.

It localises to the cytoplasm. In terms of biological role, the UvrABC repair system catalyzes the recognition and processing of DNA lesions. UvrC both incises the 5' and 3' sides of the lesion. The N-terminal half is responsible for the 3' incision and the C-terminal half is responsible for the 5' incision. The protein is UvrABC system protein C of Synechococcus sp. (strain JA-3-3Ab) (Cyanobacteria bacterium Yellowstone A-Prime).